The chain runs to 134 residues: U35-theraphotoxin-Cg1a (134 aa).

Residues 1 to 18 (MLVTLLETFSVVFQVANG) form the signal peptide. The propeptide occupies 19 to 56 (DGNCVPRFQDDVEFCDNYILEAVTEASKMIAPRAREQK).

As to expression, expressed by the venom gland.

It localises to the secreted. Probable secreted venom toxin. The polypeptide is U35-theraphotoxin-Cg1a (Chilobrachys guangxiensis (Chinese earth tiger tarantula)).